We begin with the raw amino-acid sequence, 53 residues long: MVQYAPFLLGKFSDPLLAIMVGCLSYYVYERKMGRPQGHHLHELIKKRWDDRK.

A helical transmembrane segment spans residues 7–29 (FLLGKFSDPLLAIMVGCLSYYVY).

It belongs to the NCE101 family.

It is found in the membrane. Involved in a novel pathway of export of proteins that lack a cleavable signal sequence. May be part of the export machinery or may also be a substrate for non-classical export. The chain is Non-classical export protein 1 (NCE101) from Saccharomyces cerevisiae (strain ATCC 204508 / S288c) (Baker's yeast).